The primary structure comprises 114 residues: UPF0212 protein Mbur_0968 (114 aa).

Belongs to the UPF0212 family.

In Methanococcoides burtonii (strain DSM 6242 / NBRC 107633 / OCM 468 / ACE-M), this protein is UPF0212 protein Mbur_0968.